A 117-amino-acid polypeptide reads, in one-letter code: Glycine cleavage system H-like protein (117 aa).

In terms of domain architecture, Lipoyl-binding spans 21–103 (IVKLGLSSQM…ESEGWFVVLQ (83 aa)). Lys-62 is subject to N6-lipoyllysine.

The protein belongs to the GcvH family. The cofactor is (R)-lipoate.

This chain is Glycine cleavage system H-like protein, found in Chlamydia trachomatis serovar D (strain ATCC VR-885 / DSM 19411 / UW-3/Cx).